Consider the following 82-residue polypeptide: RNA-binding protein GWCH70_0105 (82 aa).

It belongs to the eukaryotic ribosomal protein eL8 family.

This is RNA-binding protein GWCH70_0105 from Geobacillus sp. (strain WCH70).